Reading from the N-terminus, the 369-residue chain is Probable serine/threonine-protein kinase FMP48 (369 aa).

Residues 2-369 (YTKLRSIQSG…EKPCLIQDGK (368 aa)) enclose the Protein kinase domain. ATP contacts are provided by residues 8 to 16 (IQSGTFSTV) and Lys-31. The active-site Proton acceptor is Asp-133.

The protein belongs to the protein kinase superfamily. Ser/Thr protein kinase family.

It is found in the mitochondrion. The catalysed reaction is L-seryl-[protein] + ATP = O-phospho-L-seryl-[protein] + ADP + H(+). It carries out the reaction L-threonyl-[protein] + ATP = O-phospho-L-threonyl-[protein] + ADP + H(+). This Saccharomyces cerevisiae (strain ATCC 204508 / S288c) (Baker's yeast) protein is Probable serine/threonine-protein kinase FMP48 (FMP48).